The following is a 279-amino-acid chain: uncharacterized protein (279 aa).

This is an uncharacterized protein from Borreliella burgdorferi (strain ATCC 35210 / DSM 4680 / CIP 102532 / B31) (Borrelia burgdorferi).